A 365-amino-acid polypeptide reads, in one-letter code: MSQEDSSFVKLSVFGNIFQVTTRYTDLQPVGMGAFGLLCSSTDQKSGGPVAIKKVMKPFSAPVLAKRTYRELKLLKHLRHENIISLLDVFISPGEDIYFITELLGTDLHRLLSSRPLERQFVQYFLYQMLRALKFVHPAGVVHRDLKPSNILINENCDLKICDFGLARLQDPQMTGYVSTRYYRAPEIMLTWQEYDSAVDIWSVGCIFAEMIDGRPIFPGKDHVHQLTVITELLGSPPEDVINTITSENTRRFVDALPKRHKISFADRFPNANAEEIDLLEKMLDFNPKKRITAADALAHPYLAPYHDPEDEPTANERFDWSFNDADLPTDQWKVMMYSEILDFHNVDVKSEKDMTPSTTTAGAH.

The region spanning 24–303 is the Protein kinase domain; the sequence is YTDLQPVGMG…AADALAHPYL (280 aa). Residues 30–38 and K53 contribute to the ATP site; that span reads VGMGAFGLL. D145 serves as the catalytic Proton acceptor. At T175 the chain carries Phosphothreonine. A TXY motif is present at residues 175–177; sequence TGY. Y177 is subject to Phosphotyrosine.

Belongs to the protein kinase superfamily. Ser/Thr protein kinase family. MAP kinase subfamily. HOG1 sub-subfamily. It depends on Mg(2+) as a cofactor. Phosphorylated. Dually phosphorylated on Thr-175 and Tyr-177, which activates the enzyme. Rapidly dephosphorylated upon either hypo- or hyperosmotic shock.

The protein resides in the cytoplasm. The protein localises to the nucleus. It carries out the reaction L-seryl-[protein] + ATP = O-phospho-L-seryl-[protein] + ADP + H(+). The enzyme catalyses L-threonyl-[protein] + ATP = O-phospho-L-threonyl-[protein] + ADP + H(+). Activated by tyrosine and threonine phosphorylation. Proline-directed serine/threonine-protein kinase involved in a signal transduction pathway that is activated by changes in the osmolarity of the extracellular environment. Controls osmotic regulation of transcription of target genes. This is Mitogen-activated protein kinase HOG1A (HOG1A) from Wallemia ichthyophaga (strain EXF-994 / CBS 113033).